The primary structure comprises 796 residues: Cadherin-11 (796 aa).

Positions 1-22 (MKENYCLQAALVCLGMLCHSHA) are cleaved as a signal peptide. The propeptide occupies 23-53 (FAPERRGHLRPSFHGHHEKGKEGQVLQRSKR). Cadherin domains lie at 54–159 (GWVW…PPEF), 160–268 (LHET…PPKF), 269–383 (PQSV…PPMF), 384–486 (LAPS…DNAP), and 487–612 (KFAA…YILN). Residues 54–617 (GWVWNQFFVI…AYILNAGLST (564 aa)) are Extracellular-facing. N455 and N540 each carry an N-linked (GlcNAc...) asparagine glycan. Residues 618–640 (GALIAILACIVILLVIVVLFVTL) form a helical membrane-spanning segment. The Cytoplasmic segment spans residues 641-796 (RRQKKEPLIV…GSKDTFDDDS (156 aa)). S788 is subject to Phosphoserine. Phosphothreonine is present on T791.

In terms of assembly, interacts with PCDH8. In terms of tissue distribution, expressed mainly in brain but also found in other tissues. Expressed in neuroblasts. In the embryo from 67 to 72 days of gestation, detected at high levels in facial mesenchyme including the central palatal mesenchyme, dental mesenchyme, the eye and optic muscle, and the tongue (at protein level).

It is found in the cell membrane. Cadherins are calcium-dependent cell adhesion proteins. They preferentially interact with themselves in a homophilic manner in connecting cells; cadherins may thus contribute to the sorting of heterogeneous cell types. Required for proper focal adhesion assembly. Involved in the regulation of cell migration. The sequence is that of Cadherin-11 (CDH11) from Homo sapiens (Human).